A 309-amino-acid polypeptide reads, in one-letter code: Ribosomal RNA small subunit methyltransferase H (309 aa).

Residues 30 to 32 (GGH), aspartate 50, phenylalanine 74, aspartate 96, and glutamine 103 contribute to the S-adenosyl-L-methionine site.

This sequence belongs to the methyltransferase superfamily. RsmH family.

The protein resides in the cytoplasm. It catalyses the reaction cytidine(1402) in 16S rRNA + S-adenosyl-L-methionine = N(4)-methylcytidine(1402) in 16S rRNA + S-adenosyl-L-homocysteine + H(+). Specifically methylates the N4 position of cytidine in position 1402 (C1402) of 16S rRNA. The polypeptide is Ribosomal RNA small subunit methyltransferase H (Wigglesworthia glossinidia brevipalpis).